A 338-amino-acid polypeptide reads, in one-letter code: Anthranilate phosphoribosyltransferase (338 aa).

5-phospho-alpha-D-ribose 1-diphosphate is bound by residues G80, G83–D84, T88, N90–T93, K108–S116, and S120. Position 80 (G80) interacts with anthranilate. Residue S92 participates in Mg(2+) binding. Anthranilate is bound at residue N111. Residue R166 coordinates anthranilate. Mg(2+) contacts are provided by D225 and E226.

Belongs to the anthranilate phosphoribosyltransferase family. In terms of assembly, homodimer. Mg(2+) is required as a cofactor.

The catalysed reaction is N-(5-phospho-beta-D-ribosyl)anthranilate + diphosphate = 5-phospho-alpha-D-ribose 1-diphosphate + anthranilate. It participates in amino-acid biosynthesis; L-tryptophan biosynthesis; L-tryptophan from chorismate: step 2/5. In terms of biological role, catalyzes the transfer of the phosphoribosyl group of 5-phosphorylribose-1-pyrophosphate (PRPP) to anthranilate to yield N-(5'-phosphoribosyl)-anthranilate (PRA). The protein is Anthranilate phosphoribosyltransferase of Desulfatibacillum aliphaticivorans.